The following is a 229-amino-acid chain: tRNA (guanine-N(7)-)-methyltransferase (229 aa).

The S-adenosyl-L-methionine site is built by Glu62, Glu87, Asp114, and Asp137. The active site involves Asp137. Lys141 serves as a coordination point for substrate. The interaction with RNA stretch occupies residues 143–148 (KHNKRR). Residues Asp173 and 208-211 (TKFE) each bind substrate.

It belongs to the class I-like SAM-binding methyltransferase superfamily. TrmB family.

It carries out the reaction guanosine(46) in tRNA + S-adenosyl-L-methionine = N(7)-methylguanosine(46) in tRNA + S-adenosyl-L-homocysteine. It functions in the pathway tRNA modification; N(7)-methylguanine-tRNA biosynthesis. Functionally, catalyzes the formation of N(7)-methylguanine at position 46 (m7G46) in tRNA. This Francisella tularensis subsp. novicida (strain U112) protein is tRNA (guanine-N(7)-)-methyltransferase.